The following is a 138-amino-acid chain: Small ribosomal subunit protein uS11c (138 aa).

The segment at 1–21 is disordered; that stretch reads MTKSIPRIGSRRGGRIASRKN. Positions 9-21 are enriched in basic residues; it reads GSRRGGRIASRKN.

This sequence belongs to the universal ribosomal protein uS11 family. As to quaternary structure, part of the 30S ribosomal subunit.

Its subcellular location is the plastid. The protein resides in the chloroplast. The protein is Small ribosomal subunit protein uS11c of Calycanthus floridus var. glaucus (Eastern sweetshrub).